The following is a 409-amino-acid chain: Transcriptional regulator GME11370 (409 aa).

The zn(2)-C6 fungal-type DNA-binding region spans 17 to 44 (CHACAASKLKCSKEKPSCARCLKRNKPC). The disordered stretch occupies residues 49–83 (TRRAGRHHGSRSKKVPTISPASAPEPQPFSTTPPD). The span at 51-62 (RAGRHHGSRSKK) shows a compositional bias: basic residues.

It localises to the nucleus. Its function is as follows. Transcriptional regulator; part of the gene cluster that mediates the biosynthesis of dibenzodioxocinones such as pestalotiollide B, a novel class of inhibitors against cholesterol ester transfer protein (CEPT). The chain is Transcriptional regulator GME11370 from Pestalotiopsis microspora.